The following is a 414-amino-acid chain: MFNNNNEYECLCILEEKLVKHLDVIDKLIENIYDNINNLNEYINKKYNEIKILASKKPTRINWMKCDDKTHMSLFFDKKIGFIPSNEDALKILDSQLMLSNYRKKYEYKKNSWTKKDIDKLFETVDITLKKYACYYLIDQNLSCDEKINKKKMIEQSEPKQIFSQIKLFFDKYNKENTHNKGNEDNVNKNINDNISKNNITHTQNCYEPIEKEQDNSNNIFSYTKNDKNIEHNFLYFSETFWNEVSEKLSNNQNAKECQKMWLYYGCFEDDKQKKWTKDEVDKLLCLSKKYEQRNWKCIARELNTNRSPLSCFEQYIKINKLYENKEKVKLERIAFNVLEDIQLQILVSIIGDKNWAEVKKHMESLNSNTSRIKKRKTNLNFFEKEKQKKFLNDEISYKRRYLRLISATNNMEQ.

Myb-like domains are found at residues 242–266 (WNEV…LYYG), 268–320 (FEDD…IKIN), and 328–381 (KVKL…TNLN).

The protein localises to the nucleus. Its function is as follows. Transcriptional activator. Has a role in the parasite erythrocytic cycle where it directly regulates key genes involved in cell cycle regulation and progression. Binds directly to Myb regulatory elements. This is Myb1 protein from Plasmodium falciparum (isolate 3D7).